We begin with the raw amino-acid sequence, 615 residues long: Chromosomal replication initiator protein DnaA (615 aa).

The domain I, interacts with DnaA modulators stretch occupies residues 1-88 (MSEGQINLAM…RVAVTVDPSA (88 aa)). The disordered stretch occupies residues 85–272 (DPSAVPPSAP…PTSGGPDQLN (188 aa)). The segment at 88-269 (AVPPSAPTEE…STNPTSGGPD (182 aa)) is domain II. Low complexity-rich tracts occupy residues 94–112 (PTEE…PAPD) and 173–190 (PSSA…VAES). Residues 270–486 (QLNPKYTFDT…GALIRVTAFA (217 aa)) form a domain III, AAA+ region region. Positions 314, 316, 317, and 318 each coordinate ATP. Residues 487 to 615 (SLNRQSVDLH…QQAHHNHHHL (129 aa)) form a domain IV, binds dsDNA region.

The protein belongs to the DnaA family. Oligomerizes as a right-handed, spiral filament on DNA at oriC.

It localises to the cytoplasm. Its function is as follows. Plays an essential role in the initiation and regulation of chromosomal replication. ATP-DnaA binds to the origin of replication (oriC) to initiate formation of the DNA replication initiation complex once per cell cycle. Binds the DnaA box (a 9 base pair repeat at the origin) and separates the double-stranded (ds)DNA. Forms a right-handed helical filament on oriC DNA; dsDNA binds to the exterior of the filament while single-stranded (ss)DNA is stabiized in the filament's interior. The ATP-DnaA-oriC complex binds and stabilizes one strand of the AT-rich DNA unwinding element (DUE), permitting loading of DNA polymerase. After initiation quickly degrades to an ADP-DnaA complex that is not apt for DNA replication. Binds acidic phospholipids. The protein is Chromosomal replication initiator protein DnaA of Thermobifida fusca (strain YX).